A 457-amino-acid chain; its full sequence is Acetylcholine receptor subunit alpha-1-A (457 aa).

Residues 1–20 form the signal peptide; that stretch reads MDFVLTRLILLFLAATIIYS. The Extracellular segment spans residues 21–230; it reads SEDESRLIND…ITYHFLLQRL (210 aa). 2 cysteine pairs are disulfide-bonded: Cys148/Cys162 and Cys212/Cys213. Asn161 is a glycosylation site (N-linked (GlcNAc...) asparagine). Transmembrane regions (helical) follow at residues 231–255, 263–281, and 297–316; these read PLYF…VFYL, ITLS…LVIV, and YMLF…VIVI. Residues 317-428 are Cytoplasmic-facing; it reads NTHHRSPSTH…WKFVAMVLDH (112 aa). A helical membrane pass occupies residues 429-447; sequence LLLAVFMIVCIIGTLAIFA.

Belongs to the ligand-gated ion channel (TC 1.A.9) family. Acetylcholine receptor (TC 1.A.9.1) subfamily. Alpha-1/CHRNA1 sub-subfamily. As to quaternary structure, one of the alpha chains that assemble within the acetylcholine receptor, a pentamer of two alpha chains, a beta, a delta, and a gamma or epsilon chains. As to expression, oocytes.

The protein localises to the postsynaptic cell membrane. Its subcellular location is the cell membrane. The catalysed reaction is K(+)(in) = K(+)(out). The enzyme catalyses Na(+)(in) = Na(+)(out). Functionally, upon acetylcholine binding, the AChR responds by an extensive change in conformation that affects all subunits and leads to opening of an ion-conducting channel across the plasma membrane. The sequence is that of Acetylcholine receptor subunit alpha-1-A (chrna1-a) from Xenopus laevis (African clawed frog).